The following is a 499-amino-acid chain: Aspartyl/glutamyl-tRNA(Asn/Gln) amidotransferase subunit B (499 aa).

This sequence belongs to the GatB/GatE family. GatB subfamily. As to quaternary structure, heterotrimer of A, B and C subunits.

The enzyme catalyses L-glutamyl-tRNA(Gln) + L-glutamine + ATP + H2O = L-glutaminyl-tRNA(Gln) + L-glutamate + ADP + phosphate + H(+). It carries out the reaction L-aspartyl-tRNA(Asn) + L-glutamine + ATP + H2O = L-asparaginyl-tRNA(Asn) + L-glutamate + ADP + phosphate + 2 H(+). Functionally, allows the formation of correctly charged Asn-tRNA(Asn) or Gln-tRNA(Gln) through the transamidation of misacylated Asp-tRNA(Asn) or Glu-tRNA(Gln) in organisms which lack either or both of asparaginyl-tRNA or glutaminyl-tRNA synthetases. The reaction takes place in the presence of glutamine and ATP through an activated phospho-Asp-tRNA(Asn) or phospho-Glu-tRNA(Gln). This chain is Aspartyl/glutamyl-tRNA(Asn/Gln) amidotransferase subunit B, found in Bartonella tribocorum (strain CIP 105476 / IBS 506).